Consider the following 397-residue polypeptide: Glutamate 5-kinase (397 aa).

The disordered stretch occupies residues 1–28 (MVADLTSDISESQEQETETNSANNNGAV). Residue lysine 40 coordinates ATP. The substrate site is built by serine 80, aspartate 168, and asparagine 180. Residues 200 to 201 (SD) and 243 to 249 (SGGMASK) each bind ATP. One can recognise a PUA domain in the interval 306–383 (HGQVYIDQGA…QEIADILGYE (78 aa)).

This sequence belongs to the glutamate 5-kinase family.

The protein localises to the cytoplasm. It catalyses the reaction L-glutamate + ATP = L-glutamyl 5-phosphate + ADP. The protein operates within amino-acid biosynthesis; L-proline biosynthesis; L-glutamate 5-semialdehyde from L-glutamate: step 1/2. Catalyzes the transfer of a phosphate group to glutamate to form L-glutamate 5-phosphate. This is Glutamate 5-kinase from Zymomonas mobilis subsp. mobilis (strain ATCC 31821 / ZM4 / CP4).